The chain runs to 200 residues: MSTVYTRPLARLVEQLQRLPGIGPKSAQRLALHLLKRPTAEVEALANALIEAKQQVGFCSVCFHLSADPVCDICRAPSRDKTVICVVADSRDVIALEKTREFKGQYHVLGGLISPMDGIGPDQLNVQPLIRRVHQTKTQEVILAINPSVEGETTTLYVGQLLKPFTRVTRIAFGLPMGGDLEYADEVTLARALEGRRDLD.

The segment at cysteine 59–cysteine 74 adopts a C4-type zinc-finger fold. Residues threonine 82–proline 176 enclose the Toprim domain.

It belongs to the RecR family.

In terms of biological role, may play a role in DNA repair. It seems to be involved in an RecBC-independent recombinational process of DNA repair. It may act with RecF and RecO. The sequence is that of Recombination protein RecR from Acaryochloris marina (strain MBIC 11017).